Here is a 190-residue protein sequence, read N- to C-terminus: Crossover junction endodeoxyribonuclease RuvC (190 aa).

Catalysis depends on residues aspartate 8, glutamate 67, and aspartate 139. Positions 8, 67, and 139 each coordinate Mg(2+).

The protein belongs to the RuvC family. Homodimer which binds Holliday junction (HJ) DNA. The HJ becomes 2-fold symmetrical on binding to RuvC with unstacked arms; it has a different conformation from HJ DNA in complex with RuvA. In the full resolvosome a probable DNA-RuvA(4)-RuvB(12)-RuvC(2) complex forms which resolves the HJ. It depends on Mg(2+) as a cofactor.

The protein localises to the cytoplasm. The catalysed reaction is Endonucleolytic cleavage at a junction such as a reciprocal single-stranded crossover between two homologous DNA duplexes (Holliday junction).. The RuvA-RuvB-RuvC complex processes Holliday junction (HJ) DNA during genetic recombination and DNA repair. Endonuclease that resolves HJ intermediates. Cleaves cruciform DNA by making single-stranded nicks across the HJ at symmetrical positions within the homologous arms, yielding a 5'-phosphate and a 3'-hydroxyl group; requires a central core of homology in the junction. The consensus cleavage sequence is 5'-(A/T)TT(C/G)-3'. Cleavage occurs on the 3'-side of the TT dinucleotide at the point of strand exchange. HJ branch migration catalyzed by RuvA-RuvB allows RuvC to scan DNA until it finds its consensus sequence, where it cleaves and resolves the cruciform DNA. This Haemophilus influenzae (strain ATCC 51907 / DSM 11121 / KW20 / Rd) protein is Crossover junction endodeoxyribonuclease RuvC.